Reading from the N-terminus, the 263-residue chain is Post-GPI attachment to proteins factor 2 (263 aa).

6 helical membrane-spanning segments follow: residues 16–36 (FVFC…LLSL), 69–89 (YIWR…AVAF), 109–129 (FLCN…LALT), 143–163 (CFGG…WLFS), 180–200 (YKIL…YLYW), and 208–228 (PGIY…NIFF).

This sequence belongs to the PGAP2 family.

Its subcellular location is the golgi apparatus membrane. The protein localises to the endoplasmic reticulum membrane. Functionally, involved in the lipid remodeling steps of GPI-anchor maturation. Required for stable expression of GPI-anchored proteins at the cell surface. This is Post-GPI attachment to proteins factor 2 from Caenorhabditis briggsae.